The chain runs to 236 residues: Ribonuclease PH (236 aa).

Residues R86 and 124–126 (GTR) each bind phosphate.

It belongs to the RNase PH family. Homohexameric ring arranged as a trimer of dimers.

The catalysed reaction is tRNA(n+1) + phosphate = tRNA(n) + a ribonucleoside 5'-diphosphate. In terms of biological role, phosphorolytic 3'-5' exoribonuclease that plays an important role in tRNA 3'-end maturation. Removes nucleotide residues following the 3'-CCA terminus of tRNAs; can also add nucleotides to the ends of RNA molecules by using nucleoside diphosphates as substrates, but this may not be physiologically important. Probably plays a role in initiation of 16S rRNA degradation (leading to ribosome degradation) during starvation. This is Ribonuclease PH from Thermodesulfovibrio yellowstonii (strain ATCC 51303 / DSM 11347 / YP87).